Here is a 301-residue protein sequence, read N- to C-terminus: GTP cyclohydrolase FolE2 (301 aa).

The protein belongs to the GTP cyclohydrolase IV family.

The catalysed reaction is GTP + H2O = 7,8-dihydroneopterin 3'-triphosphate + formate + H(+). It functions in the pathway cofactor biosynthesis; 7,8-dihydroneopterin triphosphate biosynthesis; 7,8-dihydroneopterin triphosphate from GTP: step 1/1. Converts GTP to 7,8-dihydroneopterin triphosphate. The polypeptide is GTP cyclohydrolase FolE2 (Pseudomonas savastanoi pv. phaseolicola (strain 1448A / Race 6) (Pseudomonas syringae pv. phaseolicola (strain 1448A / Race 6))).